The primary structure comprises 541 residues: Phosphoenolpyruvate carboxykinase (ATP) (541 aa).

3 residues coordinate substrate: arginine 64, tyrosine 206, and lysine 212. ATP contacts are provided by residues lysine 212, histidine 231, and 247–255 (GLSGTGKTT). Mn(2+) contacts are provided by lysine 212 and histidine 231. Aspartate 268 lines the Mn(2+) pocket. Positions 296, 332, and 454 each coordinate ATP. Arginine 332 is a substrate binding site.

This sequence belongs to the phosphoenolpyruvate carboxykinase (ATP) family. Monomer. The cofactor is Mn(2+).

Its subcellular location is the cytoplasm. The enzyme catalyses oxaloacetate + ATP = phosphoenolpyruvate + ADP + CO2. The protein operates within carbohydrate biosynthesis; gluconeogenesis. In terms of biological role, involved in the gluconeogenesis. Catalyzes the conversion of oxaloacetate (OAA) to phosphoenolpyruvate (PEP) through direct phosphoryl transfer between the nucleoside triphosphate and OAA. The sequence is that of Phosphoenolpyruvate carboxykinase (ATP) from Wigglesworthia glossinidia brevipalpis.